The chain runs to 338 residues: Phenylalanine--tRNA ligase alpha subunit (338 aa).

A Mg(2+)-binding site is contributed by E259.

The protein belongs to the class-II aminoacyl-tRNA synthetase family. Phe-tRNA synthetase alpha subunit type 1 subfamily. In terms of assembly, tetramer of two alpha and two beta subunits. Mg(2+) serves as cofactor.

Its subcellular location is the cytoplasm. The enzyme catalyses tRNA(Phe) + L-phenylalanine + ATP = L-phenylalanyl-tRNA(Phe) + AMP + diphosphate + H(+). The polypeptide is Phenylalanine--tRNA ligase alpha subunit (Herminiimonas arsenicoxydans).